The sequence spans 203 residues: Ribonuclease HII (203 aa).

The 186-residue stretch at Gly-18–Ala-203 folds into the RNase H type-2 domain. 3 residues coordinate a divalent metal cation: Asp-24, Glu-25, and Asp-116.

The protein belongs to the RNase HII family. The cofactor is Mn(2+). Mg(2+) serves as cofactor.

The protein resides in the cytoplasm. It catalyses the reaction Endonucleolytic cleavage to 5'-phosphomonoester.. In terms of biological role, endonuclease that specifically degrades the RNA of RNA-DNA hybrids. The protein is Ribonuclease HII of Shewanella halifaxensis (strain HAW-EB4).